The chain runs to 210 residues: Cell wall protein SRL1 (210 aa).

Residues 1 to 19 form the signal peptide; the sequence is MLQSVVFFALLTFASSVSA. N-linked (GlcNAc...) asparagine glycosylation is present at Asn23. Disordered stretches follow at residues 80–99 and 118–142; these read SLSTSSASGSVTPESTHEIT and LSPSSTAASVSDEDSNNKDAKVKSF. The span at 118–127 shows a compositional bias: low complexity; the sequence is LSPSSTAASV. Residues 132 to 141 show a composition bias toward basic and acidic residues; that stretch reads SNNKDAKVKS. Asn174, Asn200, and Asn206 each carry an N-linked (GlcNAc...) asparagine glycan.

The protein resides in the secreted. The protein localises to the cell wall. It localises to the cell surface. In terms of biological role, required to stabilize the cell wall in the absence of multiple GPI-anchored mannoproteins. The protein is Cell wall protein SRL1 (SRL1) of Saccharomyces cerevisiae (strain ATCC 204508 / S288c) (Baker's yeast).